We begin with the raw amino-acid sequence, 1164 residues long: MAVSRQTSSVAGIPGAPQRHSFAKIDAPIEVPGLLDLQRESFAWLVGTPEWRARAQAEAGEDVRIMSGLEEILEELSPIEDYSENMSLTLSEPRFDDVKSTIDEAKDKDINYAAPLYVTAEFTNSMSGEIKSQTVFIGDFPMMTDKGTFIINGTERVVVSQLVRSPGVYFDASIDASTERPLHSVKVIPSRGAWLEFDVDKRDTVGVRIDRKRRQPVTVLLKALGLTTQEITDRFGFSELMMSTLEKDGVDNTDEALLEIYRKQRPGESPTRDSAQALLENSFFKAKRYDLAKVGRYKVNRKLGLGGDTDGVMTLTEEDILTTIEYLVRLHAGEKSMTSPDGTEIPIDTDDIDHFGNRRLRTVGELIQNQVRVGLSRMERVVRERMTTQDAESITPTSLINVRPVSAAIREFFGTSQLSQFLDQNNSLSGLTHKRRLSALGPGGLSRERAGLEVRDVHPSHYGRMCPIETPEGPNIGLIGSLSSYARVNPFGFIETPYRKVVDGQITDEVYYFTADEEDRHVIAQANTPFDENHRFTEERIEVRLRGGDVEVVPYTEVDYMDVSPRQMVSVATAMIPFLEHDDANRALMGANMQRQAVPLLRSEAPFVGTGMELRAAYDAGDMIIAPKAGVVEYVSADYITVMDDEGVRDTFMLRKFERTNQGTCYNQTPLVDEGDRVEAGQVLADGPGTDNGEMALGKNLLVAFMPWEGHNYEDAIILNQRMVEEDVLTSIHIEEYEIDARDTKLGPEEITRDIPNVGEDVLADLDERGIVRIGADVRDGDILVGKVTPKGETELTPEERLLRAIFGEKAREVRDTSMKVPHGETGKVIGVRVFSREDDDDLAAGVNEMVRVYVAQKRKIQDGDKLAGRHGNKGVVGKILPQEDMPFLPDGTPIDIILNTHGVPRRMNIGQVLEVHLGWLAKAGWKVDPDSQDPKIQKMLETLPEELYEIPADSLTATPVFDGASNAELSGLLRSSLPNRDGERQVDDFGKSNLIDGRSGEPFPYPVAVGYMYMLKLHHLVDEKIHARSTGPYSMITQQPLGGKAQFGGQRFGEMEVWAMQAYGAAYTLQELLTIKSDDVVGRVKVYEAIVKGENIPDPGIPESFKVLLKELQSLCLNVEVLAADGTPMELSSDDDDELENANAALGINLSRDERPDADMDVS.

Disordered regions lie at residues 975-994 (RSSLPNRDGERQVDDFGKSN) and 1143-1164 (ANAALGINLSRDERPDADMDVS). Composition is skewed to basic and acidic residues over residues 981-991 (RDGERQVDDFG) and 1152-1164 (SRDERPDADMDVS).

This sequence belongs to the RNA polymerase beta chain family. As to quaternary structure, the RNAP catalytic core consists of 2 alpha, 1 beta, 1 beta' and 1 omega subunit. When a sigma factor is associated with the core the holoenzyme is formed, which can initiate transcription.

The enzyme catalyses RNA(n) + a ribonucleoside 5'-triphosphate = RNA(n+1) + diphosphate. Its function is as follows. DNA-dependent RNA polymerase catalyzes the transcription of DNA into RNA using the four ribonucleoside triphosphates as substrates. The sequence is that of DNA-directed RNA polymerase subunit beta from Corynebacterium jeikeium (strain K411).